The chain runs to 860 residues: DNA mismatch repair protein MutS (860 aa).

An ATP-binding site is contributed by 620–627; the sequence is GPNMGGKS.

Belongs to the DNA mismatch repair MutS family.

This protein is involved in the repair of mismatches in DNA. It is possible that it carries out the mismatch recognition step. This protein has a weak ATPase activity. In Dechloromonas aromatica (strain RCB), this protein is DNA mismatch repair protein MutS.